Here is a 343-residue protein sequence, read N- to C-terminus: Phosphoribosylformylglycinamidine cyclo-ligase (343 aa).

Belongs to the AIR synthase family.

It localises to the cytoplasm. It catalyses the reaction 2-formamido-N(1)-(5-O-phospho-beta-D-ribosyl)acetamidine + ATP = 5-amino-1-(5-phospho-beta-D-ribosyl)imidazole + ADP + phosphate + H(+). Its pathway is purine metabolism; IMP biosynthesis via de novo pathway; 5-amino-1-(5-phospho-D-ribosyl)imidazole from N(2)-formyl-N(1)-(5-phospho-D-ribosyl)glycinamide: step 2/2. This is Phosphoribosylformylglycinamidine cyclo-ligase from Parasynechococcus marenigrum (strain WH8102).